The sequence spans 74 residues: Sec-independent protein translocase protein TatA (74 aa).

The helical transmembrane segment at 1 to 21 (MGTFSIWHWLIVLLVVVVVFG) threads the bilayer. The interval 50–74 (TAPAGQVANQSTADQTIDVQTKPKG) is disordered. The segment covering 56-68 (VANQSTADQTIDV) has biased composition (polar residues).

Belongs to the TatA/E family. As to quaternary structure, the Tat system comprises two distinct complexes: a TatABC complex, containing multiple copies of TatA, TatB and TatC subunits, and a separate TatA complex, containing only TatA subunits. Substrates initially bind to the TatABC complex, which probably triggers association of the separate TatA complex to form the active translocon.

The protein localises to the cell inner membrane. In terms of biological role, part of the twin-arginine translocation (Tat) system that transports large folded proteins containing a characteristic twin-arginine motif in their signal peptide across membranes. TatA could form the protein-conducting channel of the Tat system. The sequence is that of Sec-independent protein translocase protein TatA from Verminephrobacter eiseniae (strain EF01-2).